The primary structure comprises 190 residues: Bifunctional protein PyrR (190 aa).

The short motif at 112-124 (VILVDDVLYSGRS) is the PRPP-binding element.

This sequence belongs to the purine/pyrimidine phosphoribosyltransferase family. PyrR subfamily.

The catalysed reaction is UMP + diphosphate = 5-phospho-alpha-D-ribose 1-diphosphate + uracil. Its function is as follows. Regulates the transcription of the pyrimidine nucleotide (pyr) operon in response to exogenous pyrimidines. Also displays a weak uracil phosphoribosyltransferase activity which is not physiologically significant. The polypeptide is Bifunctional protein PyrR (Mycolicibacterium paratuberculosis (strain ATCC BAA-968 / K-10) (Mycobacterium paratuberculosis)).